The following is a 130-amino-acid chain: Small ribosomal subunit protein uS9 (130 aa).

This sequence belongs to the universal ribosomal protein uS9 family.

The sequence is that of Small ribosomal subunit protein uS9 from Vibrio cholerae serotype O1 (strain ATCC 39541 / Classical Ogawa 395 / O395).